Here is a 476-residue protein sequence, read N- to C-terminus: Glucose-1-phosphate adenylyltransferase (476 aa).

Residues Y114, G179, 194–195, and S212 contribute to the alpha-D-glucose 1-phosphate site; that span reads EK.

It belongs to the bacterial/plant glucose-1-phosphate adenylyltransferase family. Homotetramer.

It carries out the reaction alpha-D-glucose 1-phosphate + ATP + H(+) = ADP-alpha-D-glucose + diphosphate. It functions in the pathway glycan biosynthesis; glycogen biosynthesis. Functionally, involved in the biosynthesis of ADP-glucose, a building block required for the elongation reactions to produce glycogen. Catalyzes the reaction between ATP and alpha-D-glucose 1-phosphate (G1P) to produce pyrophosphate and ADP-Glc. The polypeptide is Glucose-1-phosphate adenylyltransferase (Yersinia pestis).